We begin with the raw amino-acid sequence, 33 residues long: Gastrin (33 aa).

The interval 1-21 (ELEPQGPPHLGTDLSKKQGPW) is disordered. Gln18 carries the pyrrolidone carboxylic acid modification. Tyr28 bears the Sulfotyrosine mark. Phe33 bears the Phenylalanine amide mark.

Belongs to the gastrin/cholecystokinin family.

The protein resides in the secreted. Its function is as follows. Gastrin stimulates the stomach mucosa to produce and secrete hydrochloric acid and the pancreas to secrete its digestive enzymes. It also stimulates smooth muscle contraction and increases blood circulation and water secretion in the stomach and intestine. The polypeptide is Gastrin (GAST) (Chinchilla chinchilla (Short-tailed chinchilla)).